We begin with the raw amino-acid sequence, 612 residues long: DNA mismatch repair protein MutL (612 aa).

It belongs to the DNA mismatch repair MutL/HexB family.

In terms of biological role, this protein is involved in the repair of mismatches in DNA. It is required for dam-dependent methyl-directed DNA mismatch repair. May act as a 'molecular matchmaker', a protein that promotes the formation of a stable complex between two or more DNA-binding proteins in an ATP-dependent manner without itself being part of a final effector complex. The chain is DNA mismatch repair protein MutL from Herminiimonas arsenicoxydans.